We begin with the raw amino-acid sequence, 140 residues long: Large ribosomal subunit protein uL11 (140 aa).

It belongs to the universal ribosomal protein uL11 family. As to quaternary structure, part of the ribosomal stalk of the 50S ribosomal subunit. Interacts with L10 and the large rRNA to form the base of the stalk. L10 forms an elongated spine to which L12 dimers bind in a sequential fashion forming a multimeric L10(L12)X complex. In terms of processing, one or more lysine residues are methylated.

In terms of biological role, forms part of the ribosomal stalk which helps the ribosome interact with GTP-bound translation factors. The chain is Large ribosomal subunit protein uL11 from Staphylococcus aureus (strain Mu3 / ATCC 700698).